The following is a 112-amino-acid chain: Large ribosomal subunit protein mL53 (112 aa).

It belongs to the mitochondrion-specific ribosomal protein mL53 family. In terms of assembly, component of the mitochondrial ribosome large subunit (39S) which comprises a 16S rRNA and about 50 distinct proteins.

The protein resides in the mitochondrion. In Bos taurus (Bovine), this protein is Large ribosomal subunit protein mL53 (MRPL53).